Here is a 55-residue protein sequence, read N- to C-terminus: uncharacterized protein (55 aa).

This is an uncharacterized protein from Homo sapiens (Human).